A 463-amino-acid chain; its full sequence is Thiamine-repressible acid phosphatase pho4 (463 aa).

Positions 1 to 18 (MKLSGISLWLLAASIVHA) are cleaved as a signal peptide. The active-site Nucleophile is His69. N-linked (GlcNAc...) asparagine glycosylation is found at Asn98, Asn104, Asn186, Asn221, Asn251, and Asn328. The Proton donor role is filled by Asp341. 3 N-linked (GlcNAc...) asparagine glycosylation sites follow: Asn433, Asn439, and Asn458.

This sequence belongs to the histidine acid phosphatase family.

It is found in the secreted. Its subcellular location is the cell wall. It carries out the reaction a phosphate monoester + H2O = an alcohol + phosphate. May dephosphorylate thiamine phosphates. In Schizosaccharomyces pombe (strain 972 / ATCC 24843) (Fission yeast), this protein is Thiamine-repressible acid phosphatase pho4 (pho4).